The sequence spans 302 residues: GLABROUS1 enhancer-binding protein (302 aa).

2 disordered regions span residues 1–55 and 158–229; these read MVTP…MKKK and GQGD…NDDD. A Phosphoserine modification is found at Ser27. A compositionally biased stretch (basic and acidic residues) spans 180–195; sequence RTNESGEEMLKEHEEE. Polar residues predominate over residues 208–217; it reads AKTTENGTSS. The interval 270-291 is non-canonical leucine-zipper; that stretch reads LSDEWKALCVEETRFNIKKLRF.

The protein belongs to the GeBP family. In terms of assembly, homo- and heterodimers. Interacts with GPL1, GPL2 and GPL3. Interacts with KIN10, KIN11 and FLZ4. Interacts with KIN10 and KIN11 via its N-terminal part. Interacts with GPL1 and GPL3 via its C-terminal part. As to expression, expressed in the apical meristem and young leaf primordia. Not detected in emerging or mature leaves. Detected in the vascular tissues of cotyledons and leaves, in hydathodes and at the base of flowers and siliques, but not in roots.

Its subcellular location is the nucleus. The protein resides in the nucleolus. Its function is as follows. DNA-binding protein, which specifically recognizes the GL1 enhancer sequence. May be involved in leaf initiation. May play redundant roles with GPL1 and GPL2 in cytokinin responses by regulating the transcript levels of type-A ARR response genes. Involved in stress responses. Plays a repressive role in cell expansion by counteracting the positive role of CPR5 in this process, but does not regulate cell proliferation or endoreduplication. May play a role in plant defense. The chain is GLABROUS1 enhancer-binding protein from Arabidopsis thaliana (Mouse-ear cress).